The chain runs to 607 residues: tRNA uridine 5-carboxymethylaminomethyl modification enzyme MnmG (607 aa).

Residues 11–16 (GGGHAG), valine 123, and serine 178 each bind FAD. NAD(+) is bound at residue 270 to 284 (GPRYCPSVEDKIVRF). Residue glutamine 367 participates in FAD binding.

Belongs to the MnmG family. As to quaternary structure, homodimer. Heterotetramer of two MnmE and two MnmG subunits. The cofactor is FAD.

The protein localises to the cytoplasm. Its function is as follows. NAD-binding protein involved in the addition of a carboxymethylaminomethyl (cmnm) group at the wobble position (U34) of certain tRNAs, forming tRNA-cmnm(5)s(2)U34. This Metamycoplasma arthritidis (strain 158L3-1) (Mycoplasma arthritidis) protein is tRNA uridine 5-carboxymethylaminomethyl modification enzyme MnmG.